Here is a 221-residue protein sequence, read N- to C-terminus: Deoxyribose-phosphate aldolase (221 aa).

Asp89 serves as the catalytic Proton donor/acceptor. Residue Lys151 is the Schiff-base intermediate with acetaldehyde of the active site. Lys180 functions as the Proton donor/acceptor in the catalytic mechanism.

It belongs to the DeoC/FbaB aldolase family. DeoC type 1 subfamily.

Its subcellular location is the cytoplasm. It carries out the reaction 2-deoxy-D-ribose 5-phosphate = D-glyceraldehyde 3-phosphate + acetaldehyde. It functions in the pathway carbohydrate degradation; 2-deoxy-D-ribose 1-phosphate degradation; D-glyceraldehyde 3-phosphate and acetaldehyde from 2-deoxy-alpha-D-ribose 1-phosphate: step 2/2. Its function is as follows. Catalyzes a reversible aldol reaction between acetaldehyde and D-glyceraldehyde 3-phosphate to generate 2-deoxy-D-ribose 5-phosphate. The protein is Deoxyribose-phosphate aldolase of Mesomycoplasma hyopneumoniae (strain 232) (Mycoplasma hyopneumoniae).